Consider the following 282-residue polypeptide: 2-dehydro-3-deoxyphosphooctonate aldolase (282 aa).

Belongs to the KdsA family.

The protein resides in the cytoplasm. It catalyses the reaction D-arabinose 5-phosphate + phosphoenolpyruvate + H2O = 3-deoxy-alpha-D-manno-2-octulosonate-8-phosphate + phosphate. It participates in carbohydrate biosynthesis; 3-deoxy-D-manno-octulosonate biosynthesis; 3-deoxy-D-manno-octulosonate from D-ribulose 5-phosphate: step 2/3. The protein operates within bacterial outer membrane biogenesis; lipopolysaccharide biosynthesis. The polypeptide is 2-dehydro-3-deoxyphosphooctonate aldolase (Shewanella halifaxensis (strain HAW-EB4)).